A 157-amino-acid chain; its full sequence is tRNA (cytidine(34)-2'-O)-methyltransferase (157 aa).

Residues Leu-78, Gly-100, Ile-122, and Ser-130 each coordinate S-adenosyl-L-methionine.

The protein belongs to the class IV-like SAM-binding methyltransferase superfamily. RNA methyltransferase TrmH family. TrmL subfamily. Homodimer.

It localises to the cytoplasm. It catalyses the reaction cytidine(34) in tRNA + S-adenosyl-L-methionine = 2'-O-methylcytidine(34) in tRNA + S-adenosyl-L-homocysteine + H(+). The catalysed reaction is 5-carboxymethylaminomethyluridine(34) in tRNA(Leu) + S-adenosyl-L-methionine = 5-carboxymethylaminomethyl-2'-O-methyluridine(34) in tRNA(Leu) + S-adenosyl-L-homocysteine + H(+). Functionally, methylates the ribose at the nucleotide 34 wobble position in the two leucyl isoacceptors tRNA(Leu)(CmAA) and tRNA(Leu)(cmnm5UmAA). Catalyzes the methyl transfer from S-adenosyl-L-methionine to the 2'-OH of the wobble nucleotide. This chain is tRNA (cytidine(34)-2'-O)-methyltransferase, found in Escherichia coli O6:H1 (strain CFT073 / ATCC 700928 / UPEC).